The primary structure comprises 336 residues: MHAIQFVEKGRAVLAELPVADLPPGHALVRVKASGLCHTDIDVLHARYGDGAFPVIPGHEYAGEVAAVASDVTVFKAGDRVVVDPNLPCGTCASCRKGLTNLCSTLKAYGVSHNGGFAEFSVVRADHLHGIGSMPYHVAALAEPLACVVNGMQSAGIGESGVVPENALVFGAGPIGLLLALSLKSRGIATVTMADINESRLAFAQDLGLQTAVSGSEALSRQRKEFDFVADATGIAPVAEAMIPLVADGGTALFFGVCAPDARISVAPFEIFRRQLKLVGSHSLNRNIPQALAILETDGEVMARLVSHRLPLSEMLPFFTKKPSDPATMKVQFAAE.

Positions 37, 59, 60, 89, 92, 95, and 103 each coordinate Zn(2+).

The protein belongs to the zinc-containing alcohol dehydrogenase family. Zn(2+) is required as a cofactor.

The catalysed reaction is D-altritol + NAD(+) = keto-D-tagatose + NADH + H(+). The protein operates within carbohydrate metabolism. Involved in D-altritol catabolism. Catalyzes the oxidation of D-altritol to D-tagatose. The protein is D-altritol 5-dehydrogenase of Agrobacterium fabrum (strain C58 / ATCC 33970) (Agrobacterium tumefaciens (strain C58)).